The primary structure comprises 332 residues: Ornithine carbamoyltransferase, catabolic (332 aa).

Carbamoyl phosphate is bound by residues 60-63 (STRT), glutamine 87, arginine 111, and 138-141 (HPTQ). Residues asparagine 170, aspartate 230, and 234–235 (SM) contribute to the L-ornithine site. Carbamoyl phosphate-binding positions include 271–272 (CL) and arginine 316.

This sequence belongs to the aspartate/ornithine carbamoyltransferase superfamily. OTCase family.

The protein resides in the cytoplasm. It catalyses the reaction carbamoyl phosphate + L-ornithine = L-citrulline + phosphate + H(+). The protein operates within amino-acid degradation; L-arginine degradation via ADI pathway; carbamoyl phosphate from L-arginine: step 2/2. Its function is as follows. Reversibly catalyzes the transfer of the carbamoyl group from carbamoyl phosphate (CP) to the N(epsilon) atom of ornithine (ORN) to produce L-citrulline. This is Ornithine carbamoyltransferase, catabolic from Bacillus cereus (strain ATCC 10987 / NRS 248).